The following is a 302-amino-acid chain: MAGQLRAYRRQIRSVQATKKITRAMELIAASRIIKAQANVRASTPYARALTRAVSAAASNSSLDHPLITEKTEVKRAAVLLCSSDRGLAGAYSSSVLREGERLTATLRAEGKEIAPYLVGRKAAAFYNFRRRAVVDQWAGFTDSPSYEDAKTIGDRLVADFGKEFADGGVDEIHVVYTHFVSMVTQEPRVIRLLPLEVVEGVEAPSDGELQPLYEFEPSADAVLDALLPQYVNSRIYNCLLQAAASELAARQRAMKSATDNADELIKKLTRLANNARQADITQEISEIVGGADALASSGSRA.

It belongs to the ATPase gamma chain family. As to quaternary structure, F-type ATPases have 2 components, CF(1) - the catalytic core - and CF(0) - the membrane proton channel. CF(1) has five subunits: alpha(3), beta(3), gamma(1), delta(1), epsilon(1). CF(0) has three main subunits: a, b and c.

The protein localises to the cell membrane. Functionally, produces ATP from ADP in the presence of a proton gradient across the membrane. The gamma chain is believed to be important in regulating ATPase activity and the flow of protons through the CF(0) complex. The polypeptide is ATP synthase gamma chain (Kineococcus radiotolerans (strain ATCC BAA-149 / DSM 14245 / SRS30216)).